The primary structure comprises 358 residues: Transcription factor PCF6 (358 aa).

Residues 1–29 (MEAAVGDGEGGGGGGGRGKRGRGGGGGEM) are disordered. Gly residues predominate over residues 7–16 (DGEGGGGGGG). The 59-residue stretch at 52–110 (GKDRHSKVYTAKGIRDRRVRLSVATAIQFYDLQDRLGFDQPSKAIEWLINAASPAIDTL) folds into the TCP domain. 2 disordered regions span residues 127-163 (ADAAPTRRRSQQQQQQLSNKSGCSSTSETSKGSDKEV) and 282-308 (ANRGTLQSNSPSNMSGHHHHHHQQQLQ). Composition is skewed to polar residues over residues 143-156 (LSNKSGCSSTSETS) and 285-296 (GTLQSNSPSNMS).

As to quaternary structure, forms homodimers and heterodimers.

The protein resides in the nucleus. Functionally, transcription activator. Binds the promoter core sequence 5'-GGNCC-3'. This is Transcription factor PCF6 (PCF6) from Oryza sativa subsp. indica (Rice).